The chain runs to 146 residues: Protein E6 (146 aa).

Zinc fingers lie at residues Cys-27–Cys-63 and Cys-100–Cys-136.

The protein belongs to the papillomaviridae E6 protein family. In terms of assembly, forms homodimers. Interacts with ubiquitin-protein ligase UBE3A/E6-AP; this interaction stimulates UBE3A ubiquitin activity. Interacts with host TP53 and EP300; this interaction inhibits TP53 activity.

The protein resides in the host cytoplasm. The protein localises to the host nucleus. Functionally, plays a major role in the induction and maintenance of cellular transformation. E6 associates with host UBE3A/E6-AP ubiquitin-protein ligase and modulates its activity. Sequesters tumor suppressor TP53 in the host cytoplasm and modulates its activity by interacting with host EP300 that results in the reduction of TP53 acetylation and activation. In turn, apoptosis induced by DNA damage is inhibited. E6 also protects host keratinocytes from apoptosis by mediating the degradation of host BAK1. May also inhibit host immune response. This chain is Protein E6, found in Homo sapiens (Human).